Reading from the N-terminus, the 473-residue chain is Suppressor of SWI4 1 homolog (473 aa).

The Brix domain occupies 29 to 292 (PHSFVFTRGC…LIKVQEGVGE (264 aa)). Phosphoserine is present on residues serine 238 and serine 240. The interval 323–473 (AQRQAQQAQN…GRGRPGKRVA (151 aa)) is disordered. Residues 324 to 334 (QRQAQQAQNVQ) show a composition bias toward low complexity. Basic and acidic residues predominate over residues 335-352 (RKQEQREAHRKKSLEGMK). The residue at position 359 (serine 359) is a Phosphoserine. The span at 375–388 (LGEDDDEQEDDDIE) shows a compositional bias: acidic residues. The segment covering 409–421 (KRLAKSPGRKRKR) has biased composition (basic residues). Positions 422-443 (WEMDRGRGRLCDQKFPKTKDKS) are enriched in basic and acidic residues. The residue at position 438 (lysine 438) is an N6-acetyllysine. The span at 462–473 (GRGRGRPGKRVA) shows a compositional bias: basic residues.

In terms of tissue distribution, widely expressed.

The protein resides in the nucleus. It is found in the nucleolus. Its function is as follows. May have a role in cell growth. This Homo sapiens (Human) protein is Suppressor of SWI4 1 homolog (PPAN).